The chain runs to 318 residues: BES1/BZR1 homolog protein 2 (318 aa).

Residues 1–13 (MAAGGGGGGGGSS) show a composition bias toward gly residues. 4 disordered regions span residues 1-34 (MAAG…RRRR), 84-133 (FKPP…PSPS), 166-195 (NSAP…PNGG), and 209-231 (APSS…CDES). The segment at 16–97 (RTPTWKEREN…ASDISGTPTN (82 aa)) is required for DNA-binding. The span at 91–101 (ISGTPTNFSTN) shows a compositional bias: polar residues. The span at 102–133 (SSIQPSPQSSAFPSPAPSYHGSPVSSSFPSPS) shows a compositional bias: low complexity.

It belongs to the BZR/LAT61 family. In terms of processing, phosphorylated. Phosphorylation increases protein degradation.

In Arabidopsis thaliana (Mouse-ear cress), this protein is BES1/BZR1 homolog protein 2 (BEH2).